We begin with the raw amino-acid sequence, 178 residues long: Gluconokinase (178 aa).

Glycine 19–threonine 26 contributes to the ATP binding site.

The protein belongs to the gluconokinase GntK/GntV family. In terms of assembly, monomer.

It carries out the reaction D-gluconate + ATP = 6-phospho-D-gluconate + ADP + H(+). Its pathway is carbohydrate acid metabolism; D-gluconate degradation. Activated by magnesium. Functionally, phosphorylates gluconate to 6-phosphogluconate. The protein is Gluconokinase of Gluconobacter oxydans (strain 621H) (Gluconobacter suboxydans).